We begin with the raw amino-acid sequence, 326 residues long: Probable cell division protein WhiA (326 aa).

The H-T-H motif DNA-binding region spans 275–308 (SLDELGRLADPPMTKDAIAGRIRRLLAMADKRAS).

Belongs to the WhiA family.

In terms of biological role, involved in cell division and chromosome segregation. In Renibacterium salmoninarum (strain ATCC 33209 / DSM 20767 / JCM 11484 / NBRC 15589 / NCIMB 2235), this protein is Probable cell division protein WhiA.